The following is a 208-amino-acid chain: Coiled-coil domain-containing protein 25 (208 aa).

The Extracellular portion of the chain corresponds to 1–105 (MVFYFTSSSV…SNLKKTADMD (105 aa)). The tract at residues 21–25 (KDKYE) is DNA-binding. N6-acetyllysine is present on K23. A helical membrane pass occupies residues 106-122 (VGQIGFHRQKDVKIVTV). Positions 117–187 (VKIVTVEKKV…REMDELRSYS (71 aa)) form a coiled coil. At 123–208 (EKKVNEILNR…QDGNDSDEFM (86 aa)) the chain is on the cytoplasmic side. The segment covering 144-184 (LAAEKEGRDREERNEKKAQIQEMKRKEKEEMKKKREMDELR) has biased composition (basic and acidic residues). The disordered stretch occupies residues 144–208 (LAAEKEGRDR…QDGNDSDEFM (65 aa)). Residue S204 is modified to Phosphoserine.

This sequence belongs to the CCDC25 family. In terms of assembly, interacts (via cytoplasmic region) with ILK.

It localises to the cell membrane. Its subcellular location is the endomembrane system. In terms of biological role, transmembrane receptor that senses neutrophil extracellular traps (NETs) and triggers the ILK-PARVB pathway to enhance cell motility. NETs are mainly composed of DNA fibers and are released by neutrophils to bind pathogens during inflammation. Formation of NETs is also associated with cancer metastasis, NET-DNA acting as a chemotactic factor to attract cancer cells. Specifically binds NETs on its extracellular region, in particular the 8-OHdG-enriched DNA present in NETs, and recruits ILK, initiating the ILK-PARVB cascade to induce cytoskeleton rearrangement and directional migration of cells. In the context of cancer, promotes cancer metastasis by sensing NETs and promoting migration of tumor cells. This is Coiled-coil domain-containing protein 25 from Mus musculus (Mouse).